A 424-amino-acid polypeptide reads, in one-letter code: Serine--tRNA ligase (424 aa).

231–233 (TAE) lines the L-serine pocket. 261–263 (RSE) lines the ATP pocket. An L-serine-binding site is contributed by glutamate 284. 348–351 (ETSS) provides a ligand contact to ATP. Residue serine 383 coordinates L-serine.

The protein belongs to the class-II aminoacyl-tRNA synthetase family. Type-1 seryl-tRNA synthetase subfamily. Homodimer. The tRNA molecule binds across the dimer.

The protein localises to the cytoplasm. It catalyses the reaction tRNA(Ser) + L-serine + ATP = L-seryl-tRNA(Ser) + AMP + diphosphate + H(+). The catalysed reaction is tRNA(Sec) + L-serine + ATP = L-seryl-tRNA(Sec) + AMP + diphosphate + H(+). It functions in the pathway aminoacyl-tRNA biosynthesis; selenocysteinyl-tRNA(Sec) biosynthesis; L-seryl-tRNA(Sec) from L-serine and tRNA(Sec): step 1/1. Its function is as follows. Catalyzes the attachment of serine to tRNA(Ser). Is also able to aminoacylate tRNA(Sec) with serine, to form the misacylated tRNA L-seryl-tRNA(Sec), which will be further converted into selenocysteinyl-tRNA(Sec). In Metamycoplasma arthritidis (strain 158L3-1) (Mycoplasma arthritidis), this protein is Serine--tRNA ligase.